Consider the following 581-residue polypeptide: AP2-like ethylene-responsive transcription factor AIL6 (581 aa).

2 disordered regions span residues 105–132 (VRYSDNSQTDTQDSSLTQIYDPRHHHNQ) and 205–240 (NNTNHRNDNDNHYRGNNNGERINNNNNNDNEKTDSE). Low complexity-rich tracts occupy residues 108-122 (SDNSQTDTQDSSLTQ) and 218-232 (RGNNNGERINNNNNN). 2 DNA-binding regions (AP2/ERF) span residues 268-331 (IYRG…TNFP) and 367-425 (IYRG…TNFE).

This sequence belongs to the AP2/ERF transcription factor family. AP2 subfamily. As to expression, expressed in roots, seedlings, hypocotyl, inflorescence, siliques, and pistils. Also detected at low levels in leaves.

The protein resides in the nucleus. Probably acts as a transcriptional activator. Binds to the GCC-box pathogenesis-related promoter element. May be involved in the regulation of gene expression by stress factors and by components of stress signal transduction pathways. The polypeptide is AP2-like ethylene-responsive transcription factor AIL6 (Arabidopsis thaliana (Mouse-ear cress)).